Reading from the N-terminus, the 1235-residue chain is Chitin synthase 4 (1235 aa).

Over residues 1-11 (MSLPRRPGPSP) the composition is skewed to pro residues. The segment at 1–203 (MSLPRRPGPS…ASKGKREKSG (203 aa)) is disordered. Topologically, residues 1–212 (MSLPRRPGPS…GGLPTPSFWN (212 aa)) are cytoplasmic. Over residues 19–28 (YRQSGSRRSR) the composition is skewed to basic residues. The span at 46–59 (PSQQQRVPSISSFP) shows a compositional bias: polar residues. Residues 94 to 107 (IRPERNRIGKDHPN) are compositionally biased toward basic and acidic residues. Residues 116-125 (NMNTLPSSTG) show a composition bias toward polar residues. A compositionally biased stretch (basic and acidic residues) spans 169–187 (ETEKSGDERRRRRKSDTTK). Over residues 188–199 (HGKIVKASKGKR) the composition is skewed to basic residues. Residues 213–233 (IYCGFVTFWCPGFVLKCFGMP) traverse the membrane as a helical segment. Topologically, residues 234–244 (EMAQQRAWREK) are extracellular. The chain crosses the membrane as a helical span at residues 245 to 265 (MGLISIILLIMGFVGFITFGF). Topologically, residues 266–514 (TQVVCGKPPL…ASKVVLYVSL (249 aa)) are cytoplasmic. A helical membrane pass occupies residues 515–535 (VLILAVVLARFVLALIFQWFI). Over 536 to 1065 (SKTYAAAKTS…SMQFIVGIEL (530 aa)) the chain is Extracellular. A disordered region spans residues 545–592 (SQTSDQRKRNRQIEDWTEDIYRAPPRLPGEVGSSVAGSSDRQSKRSSA). The span at 549–558 (DQRKRNRQIE) shows a compositional bias: basic and acidic residues. An N-linked (GlcNAc...) asparagine glycan is attached at Asn639. Residues 645-670 (FLKSDAYGSSSSPADGPGPAGFIHEA) form a disordered region. Over residues 648–665 (SDAYGSSSSPADGPGPAG) the composition is skewed to low complexity. Asn1034 is a glycosylation site (N-linked (GlcNAc...) asparagine). The chain crosses the membrane as a helical span at residues 1066 to 1086 (IGTLVLPAAIAFTFYVVIISI). At 1087 to 1092 (INSPPQ) the chain is on the cytoplasmic side. The helical transmembrane segment at 1093-1113 (IIPLVLLGLILGLPAILVVVT) threads the bilayer. At 1114–1116 (AHS) the chain is on the extracellular side. A helical transmembrane segment spans residues 1117–1137 (WSYIIWMFIYLLSLPVWNFVL). The Cytoplasmic portion of the chain corresponds to 1138-1235 (PTYAFWKFDD…RHFDDYFSDA (98 aa)). The segment at 1201–1235 (RDNVISGVGGSNGWGSSQPRGHEQGRHFDDYFSDA) is disordered. Residues 1220-1235 (RGHEQGRHFDDYFSDA) are compositionally biased toward basic and acidic residues.

This sequence belongs to the chitin synthase family. Class IV subfamily.

It localises to the cell membrane. The catalysed reaction is [(1-&gt;4)-N-acetyl-beta-D-glucosaminyl](n) + UDP-N-acetyl-alpha-D-glucosamine = [(1-&gt;4)-N-acetyl-beta-D-glucosaminyl](n+1) + UDP + H(+). Polymerizes chitin, a structural polymer of the cell wall and septum, by transferring the sugar moiety of UDP-GlcNAc to the non-reducing end of the growing chitin polymer. This is Chitin synthase 4 (chs-4) from Neurospora crassa (strain ATCC 24698 / 74-OR23-1A / CBS 708.71 / DSM 1257 / FGSC 987).